We begin with the raw amino-acid sequence, 428 residues long: Endoplasmic reticulum junction formation protein lunapark (428 aa).

A lipid anchor (N-myristoyl glycine) is attached at Gly2. The Cytoplasmic portion of the chain corresponds to 2–45; it reads GGLFSRWRTKPSTVEVLESIDKEIQALEEFREKNQRLQKLWVGR. The stretch at 16–41 forms a coiled coil; that stretch reads EVLESIDKEIQALEEFREKNQRLQKL. The helical transmembrane segment at 46–66 threads the bilayer; the sequence is LILYSSVLYLFTCLIVYLWYL. The Lumenal portion of the chain corresponds to 67–77; it reads PDEFTARLAMT. The chain crosses the membrane as a helical span at residues 78–98; the sequence is LPFFAFPLIIWSIRTVIIFFF. Residues 99–428 are Cytoplasmic-facing; the sequence is SKRTERNNEA…ELSGESLTAE (330 aa). Positions 102-128 form a coiled coil; that stretch reads TERNNEALDDLKSQRKKILEEVMEKET. Phosphoserine occurs at positions 114, 153, 177, 182, and 194. The disordered stretch occupies residues 143-247; that stretch reads SKKAKECEPP…HPPGPPLARP (105 aa). Pro residues predominate over residues 185–198; the sequence is QGPPPQVPVSPGPP. 2 positions are modified to phosphothreonine: Thr211 and Thr213. Ser217 and Ser227 each carry phosphoserine. A C4-type; plays a role in ER morphology zinc finger spans residues 276–301; it reads CQQCFSHNGMALKEEFEYIAFRCAYC. 3 positions are modified to phosphoserine: Ser321, Ser353, and Ser384. The disordered stretch occupies residues 356–428; sequence HDVLDDNTEQ…ELSGESLTAE (73 aa). Residues 386–401 show a composition bias toward acidic residues; sequence SEEPEEKQETENEEAS. Ser414 bears the Phosphoserine mark.

It belongs to the lunapark family. In terms of assembly, homodimer; homodimerization requires the C4-type zinc finger motif and decreases during mitosis in a phosphorylation-dependent manner. In terms of processing, myristoylated; myristoylation is necessary for the endoplasmic reticulum (ER) three-way ER tubular junction formation, but is not required neither for membrane translocation, membrane topology formation, nor for the specific localization to ER membranes. Post-translationally, phosphorylated. Phosphorylation occurs at Ser-177, Ser-182, Ser-217, Ser-227, Ser-321 and Ser-384 during interphase. Phosphorylation occurs at Ser-114, Ser-153, Ser-194, Thr-211 and Ser-353 during mitosis; these phosphorylations reduce both its homodimerization and the ER three-way tubular junction formation. Subject to proteasomal degradation following phosphorylation during mitosis. As to expression, expressed in neural precursor cells, where it is detected at the growth-cone-like structure and branching sites of neurite-like processes.

Its subcellular location is the endoplasmic reticulum membrane. Its function is as follows. Endoplasmic reticulum (ER)-shaping membrane protein that plays a role in determining ER morphology. Involved in the stabilization of nascent three-way ER tubular junctions within the ER network. May also play a role as a curvature-stabilizing protein within the three-way ER tubular junction network. May be involved in limb development. Is involved in central nervous system development. The polypeptide is Endoplasmic reticulum junction formation protein lunapark (Homo sapiens (Human)).